The following is a 700-amino-acid chain: Myotubularin-related protein 11 (700 aa).

The interval Met1–Ser39 is disordered. A Myotubularin phosphatase domain is found at Leu201–Tyr644.

This sequence belongs to the protein-tyrosine phosphatase family. Non-receptor class myotubularin subfamily.

This Mus musculus (Mouse) protein is Myotubularin-related protein 11 (Mtmr11).